The chain runs to 304 residues: ATP synthase gamma chain (304 aa).

It belongs to the ATPase gamma chain family. In terms of assembly, F-type ATPases have 2 components, CF(1) - the catalytic core - and CF(0) - the membrane proton channel. CF(1) has five subunits: alpha(3), beta(3), gamma(1), delta(1), epsilon(1). CF(0) has three main subunits: a, b and c.

The protein localises to the cell membrane. In terms of biological role, produces ATP from ADP in the presence of a proton gradient across the membrane. The gamma chain is believed to be important in regulating ATPase activity and the flow of protons through the CF(0) complex. This is ATP synthase gamma chain from Chloroherpeton thalassium (strain ATCC 35110 / GB-78).